The chain runs to 189 residues: Probable nicotinate-nucleotide adenylyltransferase (189 aa).

It belongs to the NadD family.

The catalysed reaction is nicotinate beta-D-ribonucleotide + ATP + H(+) = deamido-NAD(+) + diphosphate. The protein operates within cofactor biosynthesis; NAD(+) biosynthesis; deamido-NAD(+) from nicotinate D-ribonucleotide: step 1/1. Functionally, catalyzes the reversible adenylation of nicotinate mononucleotide (NaMN) to nicotinic acid adenine dinucleotide (NaAD). This Cereibacter sphaeroides (strain ATCC 17023 / DSM 158 / JCM 6121 / CCUG 31486 / LMG 2827 / NBRC 12203 / NCIMB 8253 / ATH 2.4.1.) (Rhodobacter sphaeroides) protein is Probable nicotinate-nucleotide adenylyltransferase.